The primary structure comprises 213 residues: Adenylate kinase (213 aa).

ATP is bound at residue 14–19 (GSGKGT). Positions 34–63 (SSGELFRSAIDSASPLGIKAAEYINQGLLV) are NMP. AMP contacts are provided by residues Ser-35, Arg-40, 61–63 (LLV), 89–92 (GFPR), and Gln-96. Positions 129 to 162 (SRFICPSCKHVYNQNQGLSECPTCQMKLVRRSDD) are LID. Arg-130 lines the ATP pocket. Zn(2+) contacts are provided by Cys-133 and Cys-136. Position 139-140 (139-140 (VY)) interacts with ATP. Cys-149 and Cys-152 together coordinate Zn(2+). AMP is bound by residues Arg-159 and Arg-170. Ala-198 lines the ATP pocket.

This sequence belongs to the adenylate kinase family. As to quaternary structure, monomer.

It localises to the cytoplasm. The enzyme catalyses AMP + ATP = 2 ADP. Its pathway is purine metabolism; AMP biosynthesis via salvage pathway; AMP from ADP: step 1/1. Functionally, catalyzes the reversible transfer of the terminal phosphate group between ATP and AMP. Plays an important role in cellular energy homeostasis and in adenine nucleotide metabolism. In Chlamydia abortus (strain DSM 27085 / S26/3) (Chlamydophila abortus), this protein is Adenylate kinase.